The following is a 459-amino-acid chain: Bifunctional protein GlmU (459 aa).

A pyrophosphorylase region spans residues 1–230; that stretch reads MVKRYAVILA…FDETIGINDR (230 aa). Residues 9–12, lysine 23, glutamine 73, and 78–79 contribute to the UDP-N-acetyl-alpha-D-glucosamine site; these read LAAG and GT. Position 103 (aspartate 103) interacts with Mg(2+). UDP-N-acetyl-alpha-D-glucosamine contacts are provided by glycine 140, glutamate 155, asparagine 170, and asparagine 228. Asparagine 228 lines the Mg(2+) pocket. The tract at residues 231 to 251 is linker; sequence IALAEAERIMRDRICRQHMKN. An N-acetyltransferase region spans residues 252–459; sequence GVTIIDPACT…VDRLRGKKKS (208 aa). UDP-N-acetyl-alpha-D-glucosamine contacts are provided by arginine 333 and lysine 351. Histidine 363 functions as the Proton acceptor in the catalytic mechanism. 2 residues coordinate UDP-N-acetyl-alpha-D-glucosamine: tyrosine 366 and asparagine 377. Acetyl-CoA contacts are provided by residues 386–387, alanine 423, and arginine 440; that span reads NY.

This sequence in the N-terminal section; belongs to the N-acetylglucosamine-1-phosphate uridyltransferase family. The protein in the C-terminal section; belongs to the transferase hexapeptide repeat family. In terms of assembly, homotrimer. The cofactor is Mg(2+).

It localises to the cytoplasm. It catalyses the reaction alpha-D-glucosamine 1-phosphate + acetyl-CoA = N-acetyl-alpha-D-glucosamine 1-phosphate + CoA + H(+). The catalysed reaction is N-acetyl-alpha-D-glucosamine 1-phosphate + UTP + H(+) = UDP-N-acetyl-alpha-D-glucosamine + diphosphate. It functions in the pathway nucleotide-sugar biosynthesis; UDP-N-acetyl-alpha-D-glucosamine biosynthesis; N-acetyl-alpha-D-glucosamine 1-phosphate from alpha-D-glucosamine 6-phosphate (route II): step 2/2. It participates in nucleotide-sugar biosynthesis; UDP-N-acetyl-alpha-D-glucosamine biosynthesis; UDP-N-acetyl-alpha-D-glucosamine from N-acetyl-alpha-D-glucosamine 1-phosphate: step 1/1. Its pathway is bacterial outer membrane biogenesis; LPS lipid A biosynthesis. Catalyzes the last two sequential reactions in the de novo biosynthetic pathway for UDP-N-acetylglucosamine (UDP-GlcNAc). The C-terminal domain catalyzes the transfer of acetyl group from acetyl coenzyme A to glucosamine-1-phosphate (GlcN-1-P) to produce N-acetylglucosamine-1-phosphate (GlcNAc-1-P), which is converted into UDP-GlcNAc by the transfer of uridine 5-monophosphate (from uridine 5-triphosphate), a reaction catalyzed by the N-terminal domain. The chain is Bifunctional protein GlmU from Geobacillus thermodenitrificans (strain NG80-2).